The following is a 931-amino-acid chain: Elicitor of plant defense protein 1 (931 aa).

The interval 13–32 is disordered; it reads NYNSVIPPPEPLNTDPDMHP. The 259-residue stretch at 19–277 folds into the uDENN domain; sequence PPPEPLNTDP…NLCTEAFNPL (259 aa). A cDENN domain is found at 301–433; it reads EIPGSRSIDL…ARRKLMSLLQ (133 aa). Residues 435-799 form the dDENN domain; it reads AAPHKLRYGV…DREMQPANNA (365 aa). Disordered regions lie at residues 478-552 and 566-586; these read LGKW…SRSD and SGHF…DKHP. The span at 521–537 shows a compositional bias: polar residues; it reads TSKSGKTSPQSSVSPVS. Residues 566-575 are compositionally biased toward basic and acidic residues; that stretch reads SGHFGEEKMR. The segment at 666-714 adopts a Phorbol-ester/DAG-type zinc-finger fold; it reads GHCFNWIPKDNTSICNICNDHAEGDGIYKCTGCKIFSHGRCLGHASLVC.

It belongs to the EPD1 elicitor family.

It localises to the secreted. The protein resides in the host cell. Functionally, acts as an elicitor that triggers cell death and defense responses in the host plants. The chain is Elicitor of plant defense protein 1 from Fusarium odoratissimum (strain NRRL 54006).